Reading from the N-terminus, the 816-residue chain is Pentatricopeptide repeat-containing protein At5g12100, mitochondrial (816 aa).

A mitochondrion-targeting transit peptide spans 1–39 (MVTRLRLVSRSSRYATVKFTDSVSACSCRRLFSASTDPE). The segment at 34–57 (ASTDPEPESQPEQAPPTNPVTGDE) is disordered. 20 PPR repeats span residues 108-142 (HDFS…GIYP), 143-177 (SSDS…DFRP), 178-212 (SKFM…RIYP), 213-247 (SVFI…RLLP), 248-282 (SLIT…HIEP), 283-317 (SLIT…GFVP), 318-352 (DAFT…GVKM), 353-387 (NAYT…GLVP), 388-422 (NEVI…GMKP), 423-457 (DHLA…GVSP), 458-492 (SVET…GTMP), 493-527 (NVVS…GVSP), 528-562 (KVRI…GIEL), 563-597 (NLVT…GLKP), 598-632 (DVFT…GIKP), 633-662 (TLKT…MSLK), 664-698 (DLLV…SIGL), 699-733 (DKTT…EMEP), 734-768 (EADT…GFLL), and 769-803 (DVCI…MLGD).

This sequence belongs to the PPR family. P subfamily.

Its subcellular location is the mitochondrion. The polypeptide is Pentatricopeptide repeat-containing protein At5g12100, mitochondrial (Arabidopsis thaliana (Mouse-ear cress)).